Reading from the N-terminus, the 343-residue chain is MKLEEFNYELPEELIAQKPLANRSKSRLMVVSINSSDVQHNHFEKLPQYVKDGDLFVINNSRVIPARLFGNKKQTGGKLEMVLLHPLEGKDEWEVLVKPGKRAKPGNVFEFGQETLEAEILDITPEGSRRVKFYYQGNFQQVLDQLGQMPLPPYIKEELEDPERYQTVYAKESGSVAAPTAGLHFTPEIISDIKDQGGEVAELTLHVGLGTFRPVETPNIEEHEMHAEYYQLPEETAKKINQAKQRGNRVIAVGTTVVRTLETVKTDDGLVQPGKGWTDIFIYPGYEFKVVDAMLTNFHLPKSTLLMLVSAFAGKDLIMSAYQAAIEERYRFFSFGDAMFIKN.

It belongs to the QueA family. As to quaternary structure, monomer.

It localises to the cytoplasm. It carries out the reaction 7-aminomethyl-7-carbaguanosine(34) in tRNA + S-adenosyl-L-methionine = epoxyqueuosine(34) in tRNA + adenine + L-methionine + 2 H(+). Its pathway is tRNA modification; tRNA-queuosine biosynthesis. Its function is as follows. Transfers and isomerizes the ribose moiety from AdoMet to the 7-aminomethyl group of 7-deazaguanine (preQ1-tRNA) to give epoxyqueuosine (oQ-tRNA). This Natranaerobius thermophilus (strain ATCC BAA-1301 / DSM 18059 / JW/NM-WN-LF) protein is S-adenosylmethionine:tRNA ribosyltransferase-isomerase.